We begin with the raw amino-acid sequence, 449 residues long: UDP-N-acetylmuramoylalanine--D-glutamate ligase (449 aa).

118 to 124 (GTNGKTT) provides a ligand contact to ATP.

This sequence belongs to the MurCDEF family.

It localises to the cytoplasm. The enzyme catalyses UDP-N-acetyl-alpha-D-muramoyl-L-alanine + D-glutamate + ATP = UDP-N-acetyl-alpha-D-muramoyl-L-alanyl-D-glutamate + ADP + phosphate + H(+). It functions in the pathway cell wall biogenesis; peptidoglycan biosynthesis. In terms of biological role, cell wall formation. Catalyzes the addition of glutamate to the nucleotide precursor UDP-N-acetylmuramoyl-L-alanine (UMA). This is UDP-N-acetylmuramoylalanine--D-glutamate ligase from Staphylococcus aureus (strain Mu3 / ATCC 700698).